The sequence spans 207 residues: uncharacterized protein (207 aa).

The 188-residue stretch at alanine 14–glycine 201 folds into the YrdC-like domain.

It belongs to the SUA5 family.

This is an uncharacterized protein from Haemophilus influenzae (strain ATCC 51907 / DSM 11121 / KW20 / Rd).